Reading from the N-terminus, the 279-residue chain is 3-methyl-2-oxobutanoate hydroxymethyltransferase (279 aa).

Asp44 and Asp83 together coordinate Mg(2+). 3-methyl-2-oxobutanoate contacts are provided by residues 44-45, Asp83, and Lys113; that span reads DS. Glu115 contributes to the Mg(2+) binding site. The active-site Proton acceptor is the Glu182.

The protein belongs to the PanB family. In terms of assembly, homodecamer; pentamer of dimers. Requires Mg(2+) as cofactor.

It is found in the cytoplasm. It carries out the reaction 3-methyl-2-oxobutanoate + (6R)-5,10-methylene-5,6,7,8-tetrahydrofolate + H2O = 2-dehydropantoate + (6S)-5,6,7,8-tetrahydrofolate. It participates in cofactor biosynthesis; (R)-pantothenate biosynthesis; (R)-pantoate from 3-methyl-2-oxobutanoate: step 1/2. Its function is as follows. Catalyzes the reversible reaction in which hydroxymethyl group from 5,10-methylenetetrahydrofolate is transferred onto alpha-ketoisovalerate to form ketopantoate. In Dehalococcoides mccartyi (strain CBDB1), this protein is 3-methyl-2-oxobutanoate hydroxymethyltransferase.